We begin with the raw amino-acid sequence, 589 residues long: Phenylalanine--tRNA ligase beta subunit (589 aa).

A B5 domain is found at L290 to H368. D346, D352, E355, and D356 together coordinate Mg(2+).

This sequence belongs to the phenylalanyl-tRNA synthetase beta subunit family. Type 2 subfamily. Tetramer of two alpha and two beta subunits. Requires Mg(2+) as cofactor.

Its subcellular location is the cytoplasm. It localises to the nucleus. It catalyses the reaction tRNA(Phe) + L-phenylalanine + ATP = L-phenylalanyl-tRNA(Phe) + AMP + diphosphate + H(+). This Schizosaccharomyces pombe (strain 972 / ATCC 24843) (Fission yeast) protein is Phenylalanine--tRNA ligase beta subunit (frs1).